A 69-amino-acid polypeptide reads, in one-letter code: Cytochrome c oxidase subunit 8A, mitochondrial (69 aa).

The transit peptide at 1–25 (MSVLTPLLLRGLTGPARRLPVPRAQ) directs the protein to the mitochondrion. The SIFI-degron signature appears at 2 to 19 (SVLTPLLLRGLTGPARRL). Residues 26-36 (IHSKPPREQLG) lie on the Mitochondrial matrix side of the membrane. The helical transmembrane segment at 37-60 (TMDIAIGLTSCFLCFLLPSGWVLS) threads the bilayer. The Mitochondrial intermembrane segment spans residues 61–69 (HMENYKKRE).

It belongs to the cytochrome c oxidase VIII family. As to quaternary structure, component of the cytochrome c oxidase (complex IV, CIV), a multisubunit enzyme composed of 14 subunits. The complex is composed of a catalytic core of 3 subunits MT-CO1, MT-CO2 and MT-CO3, encoded in the mitochondrial DNA, and 11 supernumerary subunits COX4I1 (or COX4I2), COX5A, COX5B, COX6A2 (or COX6A1), COX6B1 (or COX6B2), COX6C, COX7A1 (or COX7A2), COX7B, COX7C, COX8B and NDUFA4, which are encoded in the nuclear genome. The complex exists as a monomer or a dimer and forms supercomplexes (SCs) in the inner mitochondrial membrane with NADH-ubiquinone oxidoreductase (complex I, CI) and ubiquinol-cytochrome c oxidoreductase (cytochrome b-c1 complex, complex III, CIII), resulting in different assemblies (supercomplex SCI(1)III(2)IV(1) and megacomplex MCI(2)III(2)IV(2)). In terms of processing, in response to mitochondrial stress, the precursor protein is ubiquitinated by the SIFI complex in the cytoplasm before mitochondrial import, leading to its degradation. Within the SIFI complex, UBR4 initiates ubiquitin chain that are further elongated or branched by KCMF1.

Its subcellular location is the mitochondrion inner membrane. It participates in energy metabolism; oxidative phosphorylation. In terms of biological role, component of the cytochrome c oxidase, the last enzyme in the mitochondrial electron transport chain which drives oxidative phosphorylation. The respiratory chain contains 3 multisubunit complexes succinate dehydrogenase (complex II, CII), ubiquinol-cytochrome c oxidoreductase (cytochrome b-c1 complex, complex III, CIII) and cytochrome c oxidase (complex IV, CIV), that cooperate to transfer electrons derived from NADH and succinate to molecular oxygen, creating an electrochemical gradient over the inner membrane that drives transmembrane transport and the ATP synthase. Cytochrome c oxidase is the component of the respiratory chain that catalyzes the reduction of oxygen to water. Electrons originating from reduced cytochrome c in the intermembrane space (IMS) are transferred via the dinuclear copper A center (CU(A)) of subunit 2 and heme A of subunit 1 to the active site in subunit 1, a binuclear center (BNC) formed by heme A3 and copper B (CU(B)). The BNC reduces molecular oxygen to 2 water molecules using 4 electrons from cytochrome c in the IMS and 4 protons from the mitochondrial matrix. This is Cytochrome c oxidase subunit 8A, mitochondrial (COX8A) from Bos taurus (Bovine).